A 297-amino-acid polypeptide reads, in one-letter code: Ribosomal protein L11 methyltransferase (297 aa).

The S-adenosyl-L-methionine site is built by threonine 152, glycine 173, aspartate 195, and asparagine 234.

The protein belongs to the methyltransferase superfamily. PrmA family.

The protein resides in the cytoplasm. It carries out the reaction L-lysyl-[protein] + 3 S-adenosyl-L-methionine = N(6),N(6),N(6)-trimethyl-L-lysyl-[protein] + 3 S-adenosyl-L-homocysteine + 3 H(+). Methylates ribosomal protein L11. The protein is Ribosomal protein L11 methyltransferase of Cupriavidus pinatubonensis (strain JMP 134 / LMG 1197) (Cupriavidus necator (strain JMP 134)).